The primary structure comprises 490 residues: Cytochrome P450 2C39 (490 aa).

A signal peptide spans 1 to 25 (MDLVTFLVLTLSSLILLSLWRQSCG). Heme is bound at residue C435.

This sequence belongs to the cytochrome P450 family. Heme serves as cofactor. In terms of tissue distribution, liver.

Its subcellular location is the endoplasmic reticulum membrane. The protein localises to the microsome membrane. The catalysed reaction is an organic molecule + reduced [NADPH--hemoprotein reductase] + O2 = an alcohol + oxidized [NADPH--hemoprotein reductase] + H2O + H(+). It catalyses the reaction (5Z,8Z,11Z,14Z)-eicosatetraenoate + reduced [NADPH--hemoprotein reductase] + O2 = 11,12-epoxy-(5Z,8Z,14Z)-eicosatrienoate + oxidized [NADPH--hemoprotein reductase] + H2O + H(+). It carries out the reaction (5Z,8Z,11Z,14Z)-eicosatetraenoate + reduced [NADPH--hemoprotein reductase] + O2 = 14,15-epoxy-(5Z,8Z,11Z)-eicosatrienoate + oxidized [NADPH--hemoprotein reductase] + H2O + H(+). The protein operates within lipid metabolism; arachidonate metabolism. In terms of biological role, a cytochrome P450 monooxygenase that primarily catalyzes the epoxidation of 11,12 and 14,15 double bonds of (5Z,8Z,11Z,14Z)-eicosatetraenoic acid (arachidonate) forming 11,12- and 14,15-epoxyeicosatrienoic acids (11,12- and 14,15-EET) regioisomers. Mechanistically, uses molecular oxygen inserting one oxygen atom into a substrate, and reducing the second into a water molecule, with two electrons provided by NADPH via cytochrome P450 reductase (CPR; NADPH--hemoprotein reductase). In Mus musculus (Mouse), this protein is Cytochrome P450 2C39.